The chain runs to 148 residues: Large-conductance mechanosensitive channel (148 aa).

Transmembrane regions (helical) follow at residues V16 to I36 and G89 to V109.

It belongs to the MscL family. Homopentamer.

Its subcellular location is the cell inner membrane. In terms of biological role, channel that opens in response to stretch forces in the membrane lipid bilayer. May participate in the regulation of osmotic pressure changes within the cell. The protein is Large-conductance mechanosensitive channel of Paraburkholderia phytofirmans (strain DSM 17436 / LMG 22146 / PsJN) (Burkholderia phytofirmans).